We begin with the raw amino-acid sequence, 251 residues long: Pyridoxine 5'-phosphate synthase (251 aa).

Asn-7 provides a ligand contact to 3-amino-2-oxopropyl phosphate. 1-deoxy-D-xylulose 5-phosphate is bound at residue 9–10; sequence DH. Arg-18 serves as a coordination point for 3-amino-2-oxopropyl phosphate. The Proton acceptor role is filled by His-43. The 1-deoxy-D-xylulose 5-phosphate site is built by Arg-45 and His-50. Glu-73 (proton acceptor) is an active-site residue. Thr-103 serves as a coordination point for 1-deoxy-D-xylulose 5-phosphate. Catalysis depends on His-197, which acts as the Proton donor. Residues Gly-198 and 219-220 each bind 3-amino-2-oxopropyl phosphate; that span reads GH.

This sequence belongs to the PNP synthase family. Homooctamer; tetramer of dimers.

The protein resides in the cytoplasm. It carries out the reaction 3-amino-2-oxopropyl phosphate + 1-deoxy-D-xylulose 5-phosphate = pyridoxine 5'-phosphate + phosphate + 2 H2O + H(+). The protein operates within cofactor biosynthesis; pyridoxine 5'-phosphate biosynthesis; pyridoxine 5'-phosphate from D-erythrose 4-phosphate: step 5/5. Catalyzes the complicated ring closure reaction between the two acyclic compounds 1-deoxy-D-xylulose-5-phosphate (DXP) and 3-amino-2-oxopropyl phosphate (1-amino-acetone-3-phosphate or AAP) to form pyridoxine 5'-phosphate (PNP) and inorganic phosphate. This is Pyridoxine 5'-phosphate synthase from Caulobacter sp. (strain K31).